We begin with the raw amino-acid sequence, 629 residues long: DNA mismatch repair protein MutL (629 aa).

The disordered stretch occupies residues 376 to 396 (QYHEKPQQNQPHFSNTPVLPN). Residues 382–396 (QQNQPHFSNTPVLPN) show a composition bias toward polar residues.

Belongs to the DNA mismatch repair MutL/HexB family.

Its function is as follows. This protein is involved in the repair of mismatches in DNA. It is required for dam-dependent methyl-directed DNA mismatch repair. May act as a 'molecular matchmaker', a protein that promotes the formation of a stable complex between two or more DNA-binding proteins in an ATP-dependent manner without itself being part of a final effector complex. The chain is DNA mismatch repair protein MutL from Haemophilus influenzae (strain PittEE).